The chain runs to 113 residues: Protein FMC1 homolog (113 aa).

The disordered stretch occupies residues 94–113 (SAGLVGLKLPHQPGGKGWEP).

Belongs to the FMC1 family. In terms of assembly, interacts with ATPAF2.

It localises to the mitochondrion. Its function is as follows. Plays a role in the assembly/stability of the mitochondrial membrane ATP synthase (F(1)F(0) ATP synthase or Complex V). In Homo sapiens (Human), this protein is Protein FMC1 homolog.